The primary structure comprises 122 residues: Small ribosomal subunit protein uS13 (122 aa).

A disordered region spans residues 99–122; it reads RGQRTHTNARTRKGPAKAIAGKKK.

This sequence belongs to the universal ribosomal protein uS13 family. Part of the 30S ribosomal subunit. Forms a loose heterodimer with protein S19. Forms two bridges to the 50S subunit in the 70S ribosome.

Located at the top of the head of the 30S subunit, it contacts several helices of the 16S rRNA. In the 70S ribosome it contacts the 23S rRNA (bridge B1a) and protein L5 of the 50S subunit (bridge B1b), connecting the 2 subunits; these bridges are implicated in subunit movement. Contacts the tRNAs in the A and P-sites. The polypeptide is Small ribosomal subunit protein uS13 (Rhodopseudomonas palustris (strain HaA2)).